The sequence spans 1584 residues: Cilia- and flagella-associated protein 74 (1584 aa).

A coiled-coil region spans residues 300–379 (RKFQAWDRAK…EAEEEKRKKQ (80 aa)). Residues 692–706 (SEQQLEGTESSQADM) show a composition bias toward polar residues. The disordered stretch occupies residues 692–739 (SEQQLEGTESSQADMQSRKELEKLDKEQEEEQPAEPERLTTVIPPSEE). Residues 707–717 (QSRKELEKLDK) show a composition bias toward basic and acidic residues.

It belongs to the CFAP74 family.

The protein resides in the cytoplasm. Its subcellular location is the cytoskeleton. The protein localises to the cilium axoneme. It localises to the flagellum axoneme. Functionally, as part of the central apparatus of the cilium axoneme may play a role in cilium movement. May play an important role in sperm architecture and function. The chain is Cilia- and flagella-associated protein 74 from Homo sapiens (Human).